We begin with the raw amino-acid sequence, 184 residues long: Photosystem I assembly protein Ycf4 (184 aa).

2 helical membrane passes run 22 to 42 (FCWA…GTSS) and 57 to 77 (ILFF…LFIS).

This sequence belongs to the Ycf4 family.

The protein localises to the plastid. The protein resides in the chloroplast thylakoid membrane. Functionally, seems to be required for the assembly of the photosystem I complex. The chain is Photosystem I assembly protein Ycf4 from Phalaenopsis aphrodite subsp. formosana (Moth orchid).